The chain runs to 497 residues: ADP-dependent glucokinase (497 aa).

The signal sequence occupies residues 1 to 22 (MALWRGSAYAGFLALAVGCVFL). The ADPK domain occupies 52-497 (SPEGRLAAAW…LFYSEVHPHL (446 aa)). Glu-297, Glu-328, and Asp-481 together coordinate Mg(2+). Asp-481 functions as the Proton acceptor in the catalytic mechanism.

Belongs to the ADP-dependent glucokinase family. As to quaternary structure, monomer. Mg(2+) is required as a cofactor.

It localises to the secreted. The catalysed reaction is D-glucose + ADP = D-glucose 6-phosphate + AMP + H(+). The protein operates within carbohydrate degradation; glycolysis. In terms of biological role, catalyzes the phosphorylation of D-glucose to D-glucose 6-phosphate using ADP as the phosphate donor. GDP and CDP can replace ADP, but with reduced efficiency. The polypeptide is ADP-dependent glucokinase (ADPGK) (Bos taurus (Bovine)).